The following is a 616-amino-acid chain: MPKYRSATTTHGRNMAGARALWRATGMTDADFGKPIIAVVNSFTQFVPGHVHLRDLGKLVAEQIEAAGGVAKEFNTIAVDDGIAMGHGGMLYSLPSRELIADSVEYMVNAHCADAMVCISNCDKITPGMLMASLRLNIPVIFVSGGPMEAGKTKLSDQIIKLDLVDAMIQGADPKVSDSQSDQVERSACPTCGSCSGMFTANSMNCLTEALGLSQPGNGSLLATHADRKQLFLNAGKRIVELTKRYYEQDDESALPRNIASKAAFENAMTLDIAMGGSTNTVLHLLAAAQEAEIDFTMSDIDKLSRKVPQLCKVAPSTQKYHMEDVHRAGGVIGILGELDRAGLLNRDVKNVLGLTLPQTLEQYDIVVTQDDAVKNMFRAGPAGIRTTQAFSQDCRWDTLDDDRSNGCIRSLEHAYSKDGGLAVLYGNFAENGCIVKTAGVDDSILKFTGPAKVYESQDDAVEAILGGKVVAGDVVVIRYEGPKGGPGMQEMLYPTSFLKSMGLGKACALITDGRFSGGTSGLSIGHVSPEAASGGSIGLIEDGDLIAIDIPNRGIQLQVSDAELAARREAQEARGDKAWTPKNRERQVSFALRAYASLATSADKGAVRDKSKLGG.

Mg(2+) is bound at residue Asp81. Cys122 contacts [2Fe-2S] cluster. The Mg(2+) site is built by Asp123 and Lys124. Lys124 bears the N6-carboxylysine mark. Position 195 (Cys195) interacts with [2Fe-2S] cluster. Glu491 serves as a coordination point for Mg(2+). Ser517 serves as the catalytic Proton acceptor.

This sequence belongs to the IlvD/Edd family. As to quaternary structure, homodimer. The cofactor is [2Fe-2S] cluster. Requires Mg(2+) as cofactor.

It catalyses the reaction (2R)-2,3-dihydroxy-3-methylbutanoate = 3-methyl-2-oxobutanoate + H2O. It carries out the reaction (2R,3R)-2,3-dihydroxy-3-methylpentanoate = (S)-3-methyl-2-oxopentanoate + H2O. It functions in the pathway amino-acid biosynthesis; L-isoleucine biosynthesis; L-isoleucine from 2-oxobutanoate: step 3/4. It participates in amino-acid biosynthesis; L-valine biosynthesis; L-valine from pyruvate: step 3/4. Functionally, functions in the biosynthesis of branched-chain amino acids. Catalyzes the dehydration of (2R,3R)-2,3-dihydroxy-3-methylpentanoate (2,3-dihydroxy-3-methylvalerate) into 2-oxo-3-methylpentanoate (2-oxo-3-methylvalerate) and of (2R)-2,3-dihydroxy-3-methylbutanoate (2,3-dihydroxyisovalerate) into 2-oxo-3-methylbutanoate (2-oxoisovalerate), the penultimate precursor to L-isoleucine and L-valine, respectively. The protein is Dihydroxy-acid dehydratase of Escherichia fergusonii (strain ATCC 35469 / DSM 13698 / CCUG 18766 / IAM 14443 / JCM 21226 / LMG 7866 / NBRC 102419 / NCTC 12128 / CDC 0568-73).